The sequence spans 74 residues: Translation initiation factor IF-1 (74 aa).

An S1-like domain is found at 1-72; the sequence is MGKEDVIRME…TRGRIVYRKK (72 aa).

It belongs to the IF-1 family. As to quaternary structure, component of the 30S ribosomal translation pre-initiation complex which assembles on the 30S ribosome in the order IF-2 and IF-3, IF-1 and N-formylmethionyl-tRNA(fMet); mRNA recruitment can occur at any time during PIC assembly.

It is found in the cytoplasm. One of the essential components for the initiation of protein synthesis. Stabilizes the binding of IF-2 and IF-3 on the 30S subunit to which N-formylmethionyl-tRNA(fMet) subsequently binds. Helps modulate mRNA selection, yielding the 30S pre-initiation complex (PIC). Upon addition of the 50S ribosomal subunit IF-1, IF-2 and IF-3 are released leaving the mature 70S translation initiation complex. This Thermotoga maritima (strain ATCC 43589 / DSM 3109 / JCM 10099 / NBRC 100826 / MSB8) protein is Translation initiation factor IF-1.